A 400-amino-acid polypeptide reads, in one-letter code: Glycine betaine/proline betaine transport system ATP-binding protein ProV (400 aa).

The region spanning 29 to 265 is the ABC transporter domain; the sequence is LSKEQILEKT…PANDYVRTFF (237 aa). 61-68 contacts ATP; that stretch reads GLSGSGKS. 2 consecutive CBS domains span residues 280–341 and 343–400; these read ARRS…GIEA and LIDD…GNNG.

This sequence belongs to the ABC transporter superfamily. In terms of assembly, the complex is composed of two ATP-binding proteins (ProV), two transmembrane proteins (ProW) and a solute-binding protein (ProX).

The protein localises to the cell inner membrane. Its function is as follows. Part of the ProU ABC transporter complex involved in glycine betaine and proline betaine uptake. Probably responsible for energy coupling to the transport system. This chain is Glycine betaine/proline betaine transport system ATP-binding protein ProV, found in Salmonella typhimurium (strain LT2 / SGSC1412 / ATCC 700720).